The sequence spans 605 residues: Condensin-2 complex subunit H2 (605 aa).

Position 19 is a phosphothreonine (Thr19). Ser95, Ser200, Ser208, Ser228, and Ser232 each carry phosphoserine. The segment at 194-331 (LEPEGMSPME…PFDSLESKPF (138 aa)) is disordered. Residues 256–266 (GEDEDAEEAVE) show a composition bias toward acidic residues. A phosphoserine mark is found at Ser282, Ser284, Ser466, and Ser492.

Belongs to the CND2 H2 (condensin-2 subunit 2) family. In terms of assembly, component of the condensin-2 complex, which contains the SMC2 and SMC4 heterodimer, and three non SMC subunits, NCAPG2, NCAPH2 and NCAPD3 that probably regulate the complex.

The protein resides in the nucleus. The protein localises to the chromosome. Its function is as follows. Regulatory subunit of the condensin-2 complex, a complex that seems to provide chromosomes with an additional level of organization and rigidity and in establishing mitotic chromosome architecture. May promote the resolution of double-strand DNA catenanes (intertwines) between sister chromatids. Condensin-mediated compaction likely increases tension in catenated sister chromatids, providing directionality for type II topoisomerase-mediated strand exchanges toward chromatid decatenation. Required for decatenation of chromatin bridges at anaphase. Early in neurogenesis, may play an essential role to ensure accurate mitotic chromosome condensation in neuron stem cells, ultimately affecting neuron pool and cortex size. Seems to have lineage-specific role in T-cell development. This chain is Condensin-2 complex subunit H2 (NCAPH2), found in Homo sapiens (Human).